The chain runs to 418 residues: MIFDKGNVEDFDKELWDAIHAEEERQEHHIELIASENMVSKAVMAAQGSVLTNKYAEGYPGNRYYGGTECVDIVETLAIERAKKLFGAAFANVQAHSGSQANAAAYMALIEAGDTVLGMDLAAGGHLTHGSPVNFSGKTYHFVSYSVDADTEMLNYEAILEQAKAVQPKLIVAGASAYSRSIDFEKFRAIADHVGAYLMVDMAHIAGLVAAGVHPSPVPYAHIVTSTTHKTLRGPRGGLILTNDEALAKKINSAVFPGLQGGPLEHVIAAKAVAFKEALDPAFKDYAQAIIDNTAAMAAVFAQDDRFRLISGGTDNHVFLVDVTKVIANGKLAQNLLDEVNITLNKNAIPFETLSPFKTSGIRIGCAAITSRGMGVKESQTIARLIIKALVNHDQETILEEVRQEVRQLTDAFPLYKK.

Residues leucine 121 and 125 to 127 contribute to the (6S)-5,6,7,8-tetrahydrofolate site; that span reads GHL. Lysine 230 carries the N6-(pyridoxal phosphate)lysine modification. Residue 355-357 participates in (6S)-5,6,7,8-tetrahydrofolate binding; the sequence is SPF.

This sequence belongs to the SHMT family. In terms of assembly, homodimer. Pyridoxal 5'-phosphate serves as cofactor.

The protein localises to the cytoplasm. It catalyses the reaction (6R)-5,10-methylene-5,6,7,8-tetrahydrofolate + glycine + H2O = (6S)-5,6,7,8-tetrahydrofolate + L-serine. It functions in the pathway one-carbon metabolism; tetrahydrofolate interconversion. The protein operates within amino-acid biosynthesis; glycine biosynthesis; glycine from L-serine: step 1/1. Its function is as follows. Catalyzes the reversible interconversion of serine and glycine with tetrahydrofolate (THF) serving as the one-carbon carrier. This reaction serves as the major source of one-carbon groups required for the biosynthesis of purines, thymidylate, methionine, and other important biomolecules. Also exhibits THF-independent aldolase activity toward beta-hydroxyamino acids, producing glycine and aldehydes, via a retro-aldol mechanism. The protein is Serine hydroxymethyltransferase of Streptococcus pyogenes serotype M49 (strain NZ131).